The sequence spans 479 residues: D-aminoacyl-tRNA deacylase (479 aa).

It belongs to the DtdA deacylase family. Monomer. Requires Zn(2+) as cofactor.

It catalyses the reaction a D-aminoacyl-tRNA + H2O = a tRNA + a D-alpha-amino acid + H(+). The catalysed reaction is glycyl-tRNA(Ala) + H2O = tRNA(Ala) + glycine + H(+). Functionally, D-aminoacyl-tRNA deacylase with broad substrate specificity. By recycling D-aminoacyl-tRNA to D-amino acids and free tRNA molecules, this enzyme counteracts the toxicity associated with the formation of D-aminoacyl-tRNA entities in vivo. This chain is D-aminoacyl-tRNA deacylase, found in Methanococcoides burtonii (strain DSM 6242 / NBRC 107633 / OCM 468 / ACE-M).